The primary structure comprises 393 residues: Thermostable carboxypeptidase 2 (393 aa).

Zn(2+) contacts are provided by histidine 104, aspartate 109, and histidine 245. Catalysis depends on tyrosine 302, which acts as the Proton donor. Glutamate 373 acts as the Nucleophile in catalysis.

Belongs to the peptidase M20 family. Homotetramer. The cofactor is Zn(2+).

Can release basic, acidic, aromatic, and, to a lesser extent, aliphatic amino acids. This chain is Thermostable carboxypeptidase 2 (cpsA2), found in Saccharolobus solfataricus (strain ATCC 35092 / DSM 1617 / JCM 11322 / P2) (Sulfolobus solfataricus).